A 542-amino-acid chain; its full sequence is CTP synthase (542 aa).

Positions 1 to 265 (MTRYIFVTGG…DEIIVERFGL (265 aa)) are amidoligase domain. Ser13 contacts CTP. A UTP-binding site is contributed by Ser13. ATP contacts are provided by residues 14–19 (SLGKGI) and Asp71. Residues Asp71 and Glu139 each contribute to the Mg(2+) site. CTP-binding positions include 146–148 (DIE), 186–191 (KTKPTQ), and Lys222. UTP-binding positions include 186-191 (KTKPTQ) and Lys222. The 252-residue stretch at 290-541 (TIAMVGKYME…VRAALENAGG (252 aa)) folds into the Glutamine amidotransferase type-1 domain. Gly351 is an L-glutamine binding site. Catalysis depends on Cys378, which acts as the Nucleophile; for glutamine hydrolysis. L-glutamine contacts are provided by residues 379-382 (LGLQ), Glu402, and Arg469. Residues His514 and Glu516 contribute to the active site.

This sequence belongs to the CTP synthase family. In terms of assembly, homotetramer.

It catalyses the reaction UTP + L-glutamine + ATP + H2O = CTP + L-glutamate + ADP + phosphate + 2 H(+). The enzyme catalyses L-glutamine + H2O = L-glutamate + NH4(+). It carries out the reaction UTP + NH4(+) + ATP = CTP + ADP + phosphate + 2 H(+). The protein operates within pyrimidine metabolism; CTP biosynthesis via de novo pathway; CTP from UDP: step 2/2. With respect to regulation, allosterically activated by GTP, when glutamine is the substrate; GTP has no effect on the reaction when ammonia is the substrate. The allosteric effector GTP functions by stabilizing the protein conformation that binds the tetrahedral intermediate(s) formed during glutamine hydrolysis. Inhibited by the product CTP, via allosteric rather than competitive inhibition. In terms of biological role, catalyzes the ATP-dependent amination of UTP to CTP with either L-glutamine or ammonia as the source of nitrogen. Regulates intracellular CTP levels through interactions with the four ribonucleotide triphosphates. This is CTP synthase from Hahella chejuensis (strain KCTC 2396).